The following is a 192-amino-acid chain: Inosine triphosphate pyrophosphatase (192 aa).

An ITP-binding site is contributed by 11 to 16; it reads TGNKNK. Residue glutamate 41 participates in Mg(2+) binding. ITP is bound by residues lysine 53, 69–70, lysine 86, 146–149, lysine 169, and 174–175; these read DT, FGWD, and HR.

Belongs to the HAM1 NTPase family. Homodimer. Requires Mg(2+) as cofactor. Mn(2+) serves as cofactor.

It is found in the cytoplasm. The enzyme catalyses ITP + H2O = IMP + diphosphate + H(+). It catalyses the reaction dITP + H2O = dIMP + diphosphate + H(+). The catalysed reaction is XTP + H2O = XMP + diphosphate + H(+). In terms of biological role, pyrophosphatase that hydrolyzes non-canonical purine nucleotides such as inosine triphosphate (ITP), deoxyinosine triphosphate (dITP) or xanthosine 5'-triphosphate (XTP) to their respective monophosphate derivatives. The enzyme does not distinguish between the deoxy- and ribose forms. Probably excludes non-canonical purines from RNA and DNA precursor pools, thus preventing their incorporation into RNA and DNA and avoiding chromosomal lesions. The protein is Inosine triphosphate pyrophosphatase of Ciona intestinalis (Transparent sea squirt).